A 154-amino-acid chain; its full sequence is S-protein homolog 12 (154 aa).

A signal peptide spans 1-30; it reads MGTNKIPKTLNGNLVLILIITIMMVTHSHG.

Belongs to the plant self-incompatibility (S1) protein family.

Its subcellular location is the secreted. The polypeptide is S-protein homolog 12 (Arabidopsis thaliana (Mouse-ear cress)).